A 475-amino-acid polypeptide reads, in one-letter code: Glycogen synthase (475 aa).

Residue K15 participates in ADP-alpha-D-glucose binding.

The protein belongs to the glycosyltransferase 1 family. Bacterial/plant glycogen synthase subfamily.

The catalysed reaction is [(1-&gt;4)-alpha-D-glucosyl](n) + ADP-alpha-D-glucose = [(1-&gt;4)-alpha-D-glucosyl](n+1) + ADP + H(+). The protein operates within glycan biosynthesis; glycogen biosynthesis. Its function is as follows. Synthesizes alpha-1,4-glucan chains using ADP-glucose. This is Glycogen synthase from Kosmotoga olearia (strain ATCC BAA-1733 / DSM 21960 / TBF 19.5.1).